The sequence spans 107 residues: Polyketide synthase CurG (107 aa).

It participates in antibiotic biosynthesis; curamycin biosynthesis. The polypeptide is Polyketide synthase CurG (curG) (Streptomyces cyaneus (Streptomyces curacoi)).